The sequence spans 449 residues: Sulfite exporter TauE/SafE family protein 5 (449 aa).

12 helical membrane passes run 1-21 (MKTLFVLFLLLLCVFAINANQ), 57-77 (AIIMAGVLCFLAALISSAGGI), 78-98 (GGGGLFIPIMTIVAGVDLKTA), 101-121 (FSAFMVTGGSIANVISNLFGG), 127-147 (YDLALLLEPCMLLGVSIGVIC), 150-170 (VLPEWLITVLFAVFLAWSSLK), 224-244 (IPWTKLGVLVIVWASFFVIYL), 259-279 (PCGVEYWILLSLQIPLALIFT), 315-335 (AMSFLAGLLGGIFGIGGGMLI), 353-373 (TSFMVFFSATMSAVQYLLLGM), 378-398 (TAYVFSFICFLASLLGLVLVQ), and 409-429 (IIVFSVGTVMSLSTVLMTSFG).

Belongs to the 4-toluene sulfonate uptake permease (TSUP) (TC 2.A.102) family.

The protein localises to the membrane. This is Sulfite exporter TauE/SafE family protein 5 from Arabidopsis thaliana (Mouse-ear cress).